The primary structure comprises 83 residues: FMRFamide-like neuropeptide 23 (83 aa).

The signal sequence occupies residues 1-24 (MLLPKISILLYILVVLQETAAVRG). A propeptide spanning residues 25-36 (ALFRSGRAVPFE) is cleaved from the precursor. Position 47 is a phenylalanine amide (Phe-47). Positions 50–83 (AGMASGVGGGSEGGPDDVKNSYIRVNGEPEIVYQ) are excised as a propeptide.

This sequence belongs to the FARP (FMRFamide related peptide) family. Each flp gene is expressed in a distinct set of neurons.

It localises to the secreted. FMRFamides and FMRFamide-like peptides are neuropeptides. The protein is FMRFamide-like neuropeptide 23 (flp-23) of Caenorhabditis elegans.